Reading from the N-terminus, the 426-residue chain is Glutamate-1-semialdehyde 2,1-aminomutase (426 aa).

Position 265 is an N6-(pyridoxal phosphate)lysine (K265).

Belongs to the class-III pyridoxal-phosphate-dependent aminotransferase family. HemL subfamily. Pyridoxal 5'-phosphate is required as a cofactor.

Its subcellular location is the cytoplasm. It carries out the reaction (S)-4-amino-5-oxopentanoate = 5-aminolevulinate. It functions in the pathway porphyrin-containing compound metabolism; protoporphyrin-IX biosynthesis; 5-aminolevulinate from L-glutamyl-tRNA(Glu): step 2/2. This is Glutamate-1-semialdehyde 2,1-aminomutase from Hyperthermus butylicus (strain DSM 5456 / JCM 9403 / PLM1-5).